The sequence spans 260 residues: 3beta-hydroxysteroid dehydrogenase 2 (260 aa).

Residues Asp-43, 69 to 70 (DV), Asn-96, Tyr-163, and Lys-167 each bind NAD(+). Tyr-163 (proton acceptor) is an active-site residue.

This sequence belongs to the short-chain dehydrogenases/reductases (SDR) family.

The catalysed reaction is 3-oxo-5beta-cholan-24-oate + NADH + H(+) = isolithocholate + NAD(+). It carries out the reaction 12alpha-hydroxy-3-oxo-5beta-cholan-24-oate + NADH + H(+) = isodeoxycholate + NAD(+). It catalyses the reaction 12alpha-hydroxy-3-oxo-5beta-cholan-24-oate + NADPH + H(+) = isodeoxycholate + NADP(+). The enzyme catalyses 7alpha,12alpha-dihydroxy-3-oxo-5beta-cholan-24-oate + NADH + H(+) = isocholate + NAD(+). The catalysed reaction is 3-oxochenodeoxycholate + NADH + H(+) = isochenodeoxycholate + NAD(+). In terms of biological role, involved in the modification of secondary bile acids into iso-bile acids (3beta-bile acids) via epimerization of the 3-OH group through a 3-oxo-intermediate. Catalyzes the reduction of 12-alpha-hydroxy-3-oxo-5-beta-cholan-24-oate (3-oxo-DCA) and 3-oxo-5-beta-cholan-24-oate (3-oxo-LCA) to yield isodeoxycholate (isoDCA) and isolithocholate (isoLCA), respectively. Is also able to catalyze the reduction of 3-dehydrocholate (3-oxo-CA or 7alpha,12alpha-dihydroxy-3-oxo-5beta-cholan-24-oate) and 7-alpha-hydroxy-3-oxo-5-beta-cholan-24-oate (3-oxo-CDCA), into isocholate (isoCA) and isochenodeoxycholate (isoCDCA), respectively. Accepts both NADH and NADPH as cosubstrates. The conversion of the abundant bile acid deoxycholate (DCA) into isoDCA by the gut bacterium E.lenta favors the growth of the keystone commensal genus Bacteroides, since isoDCA is less cytotoxic than its parent compound, DCA; iso-bile acids have thus a potential role in modulating gut community composition. This is 3beta-hydroxysteroid dehydrogenase 2 from Eggerthella lenta (strain ATCC 25559 / DSM 2243 / CCUG 17323 / JCM 9979 / KCTC 3265 / NCTC 11813 / VPI 0255 / 1899 B) (Eubacterium lentum).